A 256-amino-acid polypeptide reads, in one-letter code: Ribosomal RNA large subunit methyltransferase E (256 aa).

Residues glycine 50, tryptophan 52, aspartate 69, aspartate 85, and aspartate 108 each coordinate S-adenosyl-L-methionine. Lysine 148 (proton acceptor) is an active-site residue. In terms of domain architecture, TRAM spans 195 to 253; that stretch reads SLRKGDVVDVTIDAMGKTGDGIAHVDDFVVFVKGGSVGDKLKIKITDVKPSFAFADIVE.

It belongs to the class I-like SAM-binding methyltransferase superfamily. RNA methyltransferase RlmE family.

Its subcellular location is the cytoplasm. The enzyme catalyses uridine(2552) in 23S rRNA + S-adenosyl-L-methionine = 2'-O-methyluridine(2552) in 23S rRNA + S-adenosyl-L-homocysteine + H(+). Functionally, specifically methylates the uridine in position 2552 of 23S rRNA at the 2'-O position of the ribose in the fully assembled 50S ribosomal subunit. In Methanocella arvoryzae (strain DSM 22066 / NBRC 105507 / MRE50), this protein is Ribosomal RNA large subunit methyltransferase E.